We begin with the raw amino-acid sequence, 378 residues long: MSLSKKRKLESGDSGGAGAGGEGAEEENGGEQEAAPPRPRRTKSERDQLYYECYSDVSVHEEMIADQVRTEAYRLGILKNWAALRGKTVLDVGAGTGILSIFCAQAGARRVYAVEASAIWQQAREVVRLNGLEDRVHVLPGPVETVELPERVDAIVSEWMGYGLLHESMLSSVLHARTKWLKEGGLLLPASAELFVAPISDQMLEWRLGFWSQVKQHYGVDMSCMESFATRCLMGHSEIVVQDLSGEDVLARPQRFAQLELARAGLEQELEAGVGGRFRCSCYGSAPLHGFAVWFQVTFPGGDSEKPLVLSTSPFHPATHWKQALLYLNEPVPVEQDTDISGEITLLPSPDNPRRLRILLRYKVGDHEEKTKDFAMED.

Positions methionine 1–arginine 46 are disordered. Over residues aspartate 13–glutamate 22 the composition is skewed to gly residues. The residue at position 38 (arginine 38) is an Asymmetric dimethylarginine; by autocatalysis. In terms of domain architecture, SAM-dependent MTase PRMT-type spans aspartate 47–glutamate 377. 5 residues coordinate S-adenosyl-L-methionine: histidine 60, arginine 69, glycine 93, glutamate 115, and glutamate 144. Active-site residues include glutamate 158 and glutamate 167.

This sequence belongs to the class I-like SAM-binding methyltransferase superfamily. Protein arginine N-methyltransferase family. PRMT6 subfamily. Interacts with (and methylates) HIV-1 Tat, Rev and Nucleocapsid protein p7 (NC). Interacts with EPB41L3 and NCOA1. Automethylation enhances its stability.

The protein resides in the nucleus. The catalysed reaction is L-arginyl-[protein] + 2 S-adenosyl-L-methionine = N(omega),N(omega)-dimethyl-L-arginyl-[protein] + 2 S-adenosyl-L-homocysteine + 2 H(+). In terms of biological role, arginine methyltransferase that can catalyze the formation of both omega-N monomethylarginine (MMA) and asymmetrical dimethylarginine (aDMA), with a strong preference for the formation of aDMA. Preferentially methylates arginyl residues present in a glycine and arginine-rich domain and displays preference for monomethylated substrates. Specifically mediates the asymmetric dimethylation of histone H3 'Arg-2' to form H3R2me2a. H3R2me2a represents a specific tag for epigenetic transcriptional repression and is mutually exclusive with methylation on histone H3 'Lys-4' (H3K4me2 and H3K4me3). Acts as a transcriptional repressor of various genes such as HOXA2, THBS1 and TP53. Repression of TP53 blocks cellular senescence. Also methylates histone H2A and H4 'Arg-3' (H2AR3me and H4R3me, respectively). Acts as a regulator of DNA base excision during DNA repair by mediating the methylation of DNA polymerase beta (POLB), leading to the stimulation of its polymerase activity by enhancing DNA binding and processivity. Methylates HMGA1. Regulates alternative splicing events. Acts as a transcriptional coactivator of a number of steroid hormone receptors including ESR1, ESR2, PGR and NR3C1. Promotes fasting-induced transcriptional activation of the gluconeogenic program through methylation of the CRTC2 transcription coactivator. Methylates GPS2, protecting GPS2 from ubiquitination and degradation. Methylates SIRT7, inhibiting SIRT7 histone deacetylase activity and promoting mitochondria biogenesis. The sequence is that of Protein arginine N-methyltransferase 6 (Prmt6) from Mus musculus (Mouse).